A 168-amino-acid chain; its full sequence is Vasopressin-neurophysin 2-copeptin (168 aa).

Residues 1–23 (MLAMMLNTTLSACFLSLLALTSA) form the signal peptide. Residues Cys24 and Cys29 are joined by a disulfide bond. At Gly32 the chain carries Glycine amide. 7 disulfide bridges follow: Cys45/Cys89, Cys48/Cys62, Cys56/Cys79, Cys63/Cys69, Cys96/Cys108, Cys102/Cys120, and Cys109/Cys114. N-linked (GlcNAc...) asparagine glycosylation is present at Asn135.

Belongs to the vasopressin/oxytocin family. Interacts with vasopressin receptors V1bR/AVPR1B (Ki=85 pM), V1aR/AVPR1A (Ki=0.6 nM) and V2R/AVPR2 (Ki=4.9 nM). Interacts with oxytocin receptor (OXTR) (Ki=110 nM).

The protein resides in the secreted. Its function is as follows. Neurophysin 2 specifically binds vasopressin. Vasopressin has a direct antidiuretic action on the kidney, it also causes vasoconstriction of the peripheral vessels. Acts by binding to vasopressin receptors (V1bR/AVPR1B, V1aR/AVPR1A, and V2R/AVPR2). This chain is Vasopressin-neurophysin 2-copeptin (Avp), found in Rattus norvegicus (Rat).